The primary structure comprises 504 residues: L-amino-acid oxidase (504 aa).

Residues 1-18 form the signal peptide; the sequence is MNIFFMFSLLFLATLGSC. A disulfide bridge connects residues C28 and C191. Residues 61–62, 81–82, R89, and 105–108 contribute to the FAD site; these read MS, EA, and GPMR. A substrate-binding site is contributed by R108. N190 is a glycosylation site (N-linked (GlcNAc...) asparagine). Residue H241 participates in substrate binding. An FAD-binding site is contributed by V279. The cysteines at positions 349 and 430 are disulfide-linked. N-linked (GlcNAc...) asparagine glycosylation occurs at N379. Y390 is a binding site for substrate. FAD-binding positions include E475 and 482–487; that span reads GWIDST. Residue 482 to 483 participates in substrate binding; sequence GW.

This sequence belongs to the flavin monoamine oxidase family. FIG1 subfamily. In terms of assembly, homodimer; non-covalently linked. FAD is required as a cofactor. As to expression, expressed by the venom gland.

It localises to the secreted. The catalysed reaction is an L-alpha-amino acid + O2 + H2O = a 2-oxocarboxylate + H2O2 + NH4(+). Functionally, catalyzes an oxidative deamination of predominantly hydrophobic and aromatic L-amino acids, thus producing hydrogen peroxide that may contribute to the diverse toxic effects of this enzyme. Exhibits diverse biological activities, such as hemorrhage, hemolysis, edema, apoptosis of vascular endothelial cells or tumor cell lines, antibacterial and antiparasitic activities, as well as regulation of platelet aggregation. Its effect on platelets is controversial, since it either induces aggregation or inhibits agonist-induced aggregation. These different effects are probably due to different experimental conditions. The protein is L-amino-acid oxidase of Echis ocellatus (Ocellated saw-scaled viper).